Here is a 206-residue protein sequence, read N- to C-terminus: Large ribosomal subunit protein bL17 (206 aa).

Positions 130-141 (ERARGTRFEARR) are enriched in basic and acidic residues. The segment at 130–206 (ERARGTRFEA…SGAGEQNSAN (77 aa)) is disordered. 2 stretches are compositionally biased toward low complexity: residues 160 to 181 (TAAA…GAAG) and 189 to 200 (DDSGIGDDSGAG).

This sequence belongs to the bacterial ribosomal protein bL17 family. In terms of assembly, part of the 50S ribosomal subunit. Contacts protein L32.

The chain is Large ribosomal subunit protein bL17 from Frankia casuarinae (strain DSM 45818 / CECT 9043 / HFP020203 / CcI3).